Consider the following 376-residue polypeptide: Chaperone protein DnaJ (376 aa).

Residues 5–69 enclose the J domain; the sequence is DYYEVLGISK…QKRAQYDQYG (65 aa). A CR-type zinc finger spans residues 133–215; it reads GKDAEIEIPR…CHGKGRVTKT (83 aa). Zn(2+) contacts are provided by Cys-146, Cys-149, Cys-163, Cys-166, Cys-189, Cys-192, Cys-203, and Cys-206. CXXCXGXG motif repeat units follow at residues 146–153, 163–170, 189–196, and 203–210; these read CDTCHGSG, CSHCGGKG, CQYCNGTG, and CPTCHGKG.

The protein belongs to the DnaJ family. In terms of assembly, homodimer. It depends on Zn(2+) as a cofactor.

The protein localises to the cytoplasm. Participates actively in the response to hyperosmotic and heat shock by preventing the aggregation of stress-denatured proteins and by disaggregating proteins, also in an autonomous, DnaK-independent fashion. Unfolded proteins bind initially to DnaJ; upon interaction with the DnaJ-bound protein, DnaK hydrolyzes its bound ATP, resulting in the formation of a stable complex. GrpE releases ADP from DnaK; ATP binding to DnaK triggers the release of the substrate protein, thus completing the reaction cycle. Several rounds of ATP-dependent interactions between DnaJ, DnaK and GrpE are required for fully efficient folding. Also involved, together with DnaK and GrpE, in the DNA replication of plasmids through activation of initiation proteins. In Listeria monocytogenes serotype 4a (strain HCC23), this protein is Chaperone protein DnaJ.